Consider the following 432-residue polypeptide: Adenylosuccinate synthetase (432 aa).

Residues 13–19 and 41–43 contribute to the GTP site; these read GDEGKGK and GHT. The Proton acceptor role is filled by D14. 2 residues coordinate Mg(2+): D14 and G41. Residues 14–17, 39–42, T130, R144, Q225, T240, and R304 contribute to the IMP site; these read DEGK and NAGH. The active-site Proton donor is the H42. 300-306 contacts substrate; the sequence is ATTGRKR. Residues R306, 332–334, and 415–417 contribute to the GTP site; these read KLD and STG.

It belongs to the adenylosuccinate synthetase family. As to quaternary structure, homodimer. The cofactor is Mg(2+).

The protein localises to the cytoplasm. It carries out the reaction IMP + L-aspartate + GTP = N(6)-(1,2-dicarboxyethyl)-AMP + GDP + phosphate + 2 H(+). The protein operates within purine metabolism; AMP biosynthesis via de novo pathway; AMP from IMP: step 1/2. Functionally, plays an important role in the de novo pathway of purine nucleotide biosynthesis. Catalyzes the first committed step in the biosynthesis of AMP from IMP. This chain is Adenylosuccinate synthetase, found in Pseudoalteromonas atlantica (strain T6c / ATCC BAA-1087).